A 39-amino-acid polypeptide reads, in one-letter code: Omega-theraphotoxin-Ba1a (39 aa).

3 disulfide bridges follow: Cys-4/Cys-25, Cys-8/Cys-31, and Cys-17/Cys-36.

Belongs to the neurotoxin 12 (Hwtx-2) family. 06 (TXP1) subfamily. In terms of tissue distribution, expressed by the venom gland.

Its subcellular location is the secreted. Its function is as follows. Inhibits voltage-gated calcium channels (Cav) in rat cerebellar granule cells. Has insecticidal activity to crickets (Acheta domesticus). Is not toxic to mice. This chain is Omega-theraphotoxin-Ba1a, found in Brachypelma albiceps (Mexican golden redrump tarantula).